Here is a 130-residue protein sequence, read N- to C-terminus: Small ribosomal subunit protein uS9 (130 aa).

Residues Thr105–Arg130 are disordered. Basic residues predominate over residues Lys111–Arg130.

This sequence belongs to the universal ribosomal protein uS9 family.

This Lactiplantibacillus plantarum (strain ATCC BAA-793 / NCIMB 8826 / WCFS1) (Lactobacillus plantarum) protein is Small ribosomal subunit protein uS9.